A 444-amino-acid polypeptide reads, in one-letter code: Methionine aminopeptidase 2-1 (444 aa).

The disordered stretch occupies residues 1–92; it reads MAAQVTEKLQ…VPVSNLFPNN (92 aa). Over residues 15-29 the composition is skewed to polar residues; the sequence is NGQNGDAKANSTAVG. A compositionally biased stretch (acidic residues) spans 34–45; it reads GEAEDDSDDEKE. Over residues 59–73 the composition is skewed to basic residues; sequence AKKKKRKSKKKKKGG. H197 provides a ligand contact to substrate. Positions 217, 228, and 297 each coordinate a divalent metal cation. Substrate is bound at residue H305. A divalent metal cation is bound by residues E330 and E425.

Belongs to the peptidase M24A family. Methionine aminopeptidase eukaryotic type 2 subfamily. The cofactor is Co(2+). Zn(2+) serves as cofactor. It depends on Mn(2+) as a cofactor. Fe(2+) is required as a cofactor.

It is found in the cytoplasm. The enzyme catalyses Release of N-terminal amino acids, preferentially methionine, from peptides and arylamides.. Cotranslationally removes the N-terminal methionine from nascent proteins. The N-terminal methionine is often cleaved when the second residue in the primary sequence is small and uncharged (Met-Ala-, Cys, Gly, Pro, Ser, Thr, or Val). The protein is Methionine aminopeptidase 2-1 of Neosartorya fischeri (strain ATCC 1020 / DSM 3700 / CBS 544.65 / FGSC A1164 / JCM 1740 / NRRL 181 / WB 181) (Aspergillus fischerianus).